The following is a 399-amino-acid chain: Yellow-related salivary protein M10 (399 aa).

An N-terminal signal peptide occupies residues 1–18 (MKFILSVLALASFQHVFC). N-linked (GlcNAc...) asparagine glycans are attached at residues Asn29 and Asn83.

It belongs to the major royal jelly protein family. In terms of tissue distribution, salivary gland (at protein level).

Its subcellular location is the secreted. Functionally, probably modulates blood feeding of sand flies on vertebrate species by binding and sequestering different mediators involved in the host response. Functions as a chemoattractant for host neutrophils; likely acts through a G-protein-coupled receptor and effect is dependent on calcium influx and phosphatidylinositol 3-kinases (PI3K) activity. In terms of biological role, (Microbial infection) Probably enhances infection caused by Leishmania species in the host through augmentation of host neutrophil recruitment into the skin. The sequence is that of Yellow-related salivary protein M10 from Phlebotomus duboscqi (Sandfly).